The sequence spans 578 residues: Arginine--tRNA ligase (578 aa).

A 'HIGH' region motif is present at residues 127-137; sequence PNLAKEMHVGH.

It belongs to the class-I aminoacyl-tRNA synthetase family. In terms of assembly, monomer.

The protein localises to the cytoplasm. It carries out the reaction tRNA(Arg) + L-arginine + ATP = L-arginyl-tRNA(Arg) + AMP + diphosphate. The sequence is that of Arginine--tRNA ligase from Pseudomonas entomophila (strain L48).